The primary structure comprises 218 residues: Outer-membrane lipoprotein LolB (218 aa).

The signal sequence occupies residues 1-20 (MSQVIRTLALTGLALAGLSG). The N-palmitoyl cysteine moiety is linked to residue Cys21. Cys21 is lipidated: S-diacylglycerol cysteine.

The protein belongs to the LolB family. Monomer.

The protein localises to the cell outer membrane. In terms of biological role, plays a critical role in the incorporation of lipoproteins in the outer membrane after they are released by the LolA protein. This Xanthomonas campestris pv. campestris (strain B100) protein is Outer-membrane lipoprotein LolB.